The following is a 354-amino-acid chain: Probable DNA repair protein RAD51 homolog 4 (354 aa).

115–122 lines the ATP pocket; that stretch reads GNTSCGKT.

The protein belongs to the RecA family. RAD51 subfamily.

It is found in the nucleus. In terms of biological role, involved in the homologous recombination repair (HRR) pathway of double-stranded DNA breaks arising during DNA replication or induced by DNA-damaging agents. The polypeptide is Probable DNA repair protein RAD51 homolog 4 (rad51d) (Dictyostelium discoideum (Social amoeba)).